A 371-amino-acid polypeptide reads, in one-letter code: 4-hydroxy-3-methylbut-2-en-1-yl diphosphate synthase (flavodoxin) (371 aa).

The [4Fe-4S] cluster site is built by cysteine 271, cysteine 274, cysteine 306, and glutamate 313.

This sequence belongs to the IspG family. The cofactor is [4Fe-4S] cluster.

The enzyme catalyses (2E)-4-hydroxy-3-methylbut-2-enyl diphosphate + oxidized [flavodoxin] + H2O + 2 H(+) = 2-C-methyl-D-erythritol 2,4-cyclic diphosphate + reduced [flavodoxin]. The protein operates within isoprenoid biosynthesis; isopentenyl diphosphate biosynthesis via DXP pathway; isopentenyl diphosphate from 1-deoxy-D-xylulose 5-phosphate: step 5/6. Functionally, converts 2C-methyl-D-erythritol 2,4-cyclodiphosphate (ME-2,4cPP) into 1-hydroxy-2-methyl-2-(E)-butenyl 4-diphosphate. The polypeptide is 4-hydroxy-3-methylbut-2-en-1-yl diphosphate synthase (flavodoxin) (Actinobacillus succinogenes (strain ATCC 55618 / DSM 22257 / CCUG 43843 / 130Z)).